The following is a 230-amino-acid chain: Cytochrome c oxidase subunit 2 (230 aa).

Residues 1-29 lie on the Mitochondrial intermembrane side of the membrane; it reads NNFFQGYNLLFQHSLFASYMDWFHAFNCS. The chain crosses the membrane as a helical span at residues 30-50; that stretch reads LLLGVLVFVTLLFGYLIFSTF. Topologically, residues 51-63 are mitochondrial matrix; that stretch reads YFKSKKIEYQFGE. A helical membrane pass occupies residues 64 to 84; the sequence is LLCSIFPTIILLMQMVPSLSL. Residues 85–230 lie on the Mitochondrial intermembrane side of the membrane; that stretch reads LYYYGLMNLD…FKSWCFGTME (146 aa). Residues histidine 163, cysteine 198, glutamate 200, cysteine 202, histidine 206, and methionine 209 each coordinate Cu cation. Residue glutamate 200 coordinates Mg(2+).

This sequence belongs to the cytochrome c oxidase subunit 2 family. Component of the cytochrome c oxidase (complex IV, CIV), a multisubunit enzyme composed of a catalytic core of 3 subunits and several supernumerary subunits. The complex exists as a monomer or a dimer and forms supercomplexes (SCs) in the inner mitochondrial membrane with ubiquinol-cytochrome c oxidoreductase (cytochrome b-c1 complex, complex III, CIII). Requires Cu cation as cofactor.

The protein localises to the mitochondrion inner membrane. The catalysed reaction is 4 Fe(II)-[cytochrome c] + O2 + 8 H(+)(in) = 4 Fe(III)-[cytochrome c] + 2 H2O + 4 H(+)(out). Component of the cytochrome c oxidase, the last enzyme in the mitochondrial electron transport chain which drives oxidative phosphorylation. The respiratory chain contains 3 multisubunit complexes succinate dehydrogenase (complex II, CII), ubiquinol-cytochrome c oxidoreductase (cytochrome b-c1 complex, complex III, CIII) and cytochrome c oxidase (complex IV, CIV), that cooperate to transfer electrons derived from NADH and succinate to molecular oxygen, creating an electrochemical gradient over the inner membrane that drives transmembrane transport and the ATP synthase. Cytochrome c oxidase is the component of the respiratory chain that catalyzes the reduction of oxygen to water. Electrons originating from reduced cytochrome c in the intermembrane space (IMS) are transferred via the dinuclear copper A center (CU(A)) of subunit 2 and heme A of subunit 1 to the active site in subunit 1, a binuclear center (BNC) formed by heme A3 and copper B (CU(B)). The BNC reduces molecular oxygen to 2 water molecules using 4 electrons from cytochrome c in the IMS and 4 protons from the mitochondrial matrix. This is Cytochrome c oxidase subunit 2 (cox-2) from Caenorhabditis remanei (Caenorhabditis vulgaris).